The sequence spans 98 residues: C-C motif chemokine 19 (98 aa).

The signal sequence occupies residues 1–21; that stretch reads MALLLALSLLVLWTSPAPTLS. 2 disulfides stabilise this stretch: Cys29–Cys55 and Cys30–Cys71.

This sequence belongs to the intercrine beta (chemokine CC) family. As to quaternary structure, interacts with TNFAIP6 (via Link domain). As to expression, expressed at high levels in the lymph nodes, thymus and appendix. Intermediate levels seen in colon and trachea, while low levels found in spleen, small intestine, lung, kidney and stomach.

It is found in the secreted. Its function is as follows. May play a role not only in inflammatory and immunological responses but also in normal lymphocyte recirculation and homing. May play an important role in trafficking of T-cells in thymus, and T-cell and B-cell migration to secondary lymphoid organs. Binds to chemokine receptor CCR7. Recombinant CCL19 shows potent chemotactic activity for T-cells and B-cells but not for granulocytes and monocytes. Binds to atypical chemokine receptor ACKR4 and mediates the recruitment of beta-arrestin (ARRB1/2) to ACKR4. This Homo sapiens (Human) protein is C-C motif chemokine 19 (CCL19).